Here is a 426-residue protein sequence, read N- to C-terminus: DUF724 domain-containing protein 9 (426 aa).

2 stretches are compositionally biased toward polar residues: residues 164-184 and 213-222; these read ESSL…NANE and PRNQNASVND. The disordered stretch occupies residues 164–248; that stretch reads ESSLTQGSGD…REESLCSDAS (85 aa). Over residues 223–242 the composition is skewed to basic and acidic residues; sequence STRENENSEDINRKRKREES. Residues 256-425 form the DUF724 domain; it reads LPFEKKLSIW…LQFQTTASAP (170 aa). Positions 370 to 402 form a coiled coil; the sequence is AEKESIKIENERKILELQRLNEEVDKEIAQSKS.

In terms of tissue distribution, expressed in flowers.

Its subcellular location is the nucleus. Its function is as follows. May be involved in the polar growth of plant cells via transportation of RNAs. The sequence is that of DUF724 domain-containing protein 9 from Arabidopsis thaliana (Mouse-ear cress).